The primary structure comprises 122 residues: Crustacean hyperglycemic hormones 5 (122 aa).

The N-terminal stretch at Met1–Ala26 is a signal peptide. Intrachain disulfides connect Cys55-Cys91, Cys71-Cys87, and Cys74-Cys100. At Val120 the chain carries Valine amide.

The protein belongs to the arthropod CHH/MIH/GIH/VIH hormone family.

It is found in the secreted. Functionally, hormone found in the sinus gland of isopods and decapods which controls the blood sugar level. Has a secretagogue action over the amylase released from the midgut gland. May act as a stress hormone and may be involved in the control of molting and reproduction. The polypeptide is Crustacean hyperglycemic hormones 5 (CHH5) (Penaeus monodon (Giant tiger prawn)).